We begin with the raw amino-acid sequence, 338 residues long: MTRF1L release factor glutamine methyltransferase (338 aa).

Residues 167–171 (GCGSG), D190, W225, and N239 each bind S-adenosyl-L-methionine. 239–242 (NPPY) lines the substrate pocket.

It belongs to the protein N5-glutamine methyltransferase family.

The protein localises to the mitochondrion. The catalysed reaction is L-glutaminyl-[peptide chain release factor] + S-adenosyl-L-methionine = N(5)-methyl-L-glutaminyl-[peptide chain release factor] + S-adenosyl-L-homocysteine + H(+). Its function is as follows. N5-glutamine methyltransferase responsible for the methylation of the glutamine residue in the universally conserved GGQ motif of the mitochondrial translation release factors MTRF1, MTRF1L, MRPL58/ICT1 and MTRFR. The chain is MTRF1L release factor glutamine methyltransferase (HEMK1) from Homo sapiens (Human).